Consider the following 799-residue polypeptide: DNA ligase (799 aa).

Residues 1-11 show a composition bias toward basic and acidic residues; it reads MTEVKTGRVVD. The tract at residues 1-35 is disordered; it reads MTEVKTGRVVDDAPVNDAPENNAAEATSPARHDAI. Residues 67–71, 116–117, and D147 contribute to the NAD(+) site; these read DAEYD and SL. Residue K149 is the N6-AMP-lysine intermediate of the active site. Residues R170, E207, K327, and K351 each coordinate NAD(+). 4 residues coordinate Zn(2+): C445, C448, C463, and C468. One can recognise a BRCT domain in the interval 634 to 723; sequence AIVLPLQGLK…VASVDASEAV (90 aa). Residues 720–799 form a disordered region; sequence SEAVAEETPP…RGRAEQLKLF (80 aa). A compositionally biased stretch (low complexity) spans 755 to 767; it reads GSASGDDSRGAAA. Residues 787-799 show a composition bias toward basic and acidic residues; that stretch reads DVPRGRAEQLKLF.

The protein belongs to the NAD-dependent DNA ligase family. LigA subfamily. Requires Mg(2+) as cofactor. It depends on Mn(2+) as a cofactor.

The enzyme catalyses NAD(+) + (deoxyribonucleotide)n-3'-hydroxyl + 5'-phospho-(deoxyribonucleotide)m = (deoxyribonucleotide)n+m + AMP + beta-nicotinamide D-nucleotide.. In terms of biological role, DNA ligase that catalyzes the formation of phosphodiester linkages between 5'-phosphoryl and 3'-hydroxyl groups in double-stranded DNA using NAD as a coenzyme and as the energy source for the reaction. It is essential for DNA replication and repair of damaged DNA. The chain is DNA ligase from Nitratidesulfovibrio vulgaris (strain ATCC 29579 / DSM 644 / CCUG 34227 / NCIMB 8303 / VKM B-1760 / Hildenborough) (Desulfovibrio vulgaris).